The sequence spans 498 residues: Lysine--tRNA ligase (498 aa).

Mg(2+) contacts are provided by glutamate 407 and glutamate 414.

Belongs to the class-II aminoacyl-tRNA synthetase family. In terms of assembly, homodimer. Mg(2+) serves as cofactor.

Its subcellular location is the cytoplasm. It carries out the reaction tRNA(Lys) + L-lysine + ATP = L-lysyl-tRNA(Lys) + AMP + diphosphate. The protein is Lysine--tRNA ligase of Rhizobium etli (strain CIAT 652).